The primary structure comprises 86 residues: Ferredoxin-like protein YgcO (86 aa).

A 4Fe-4S ferredoxin-type domain is found at 45-74; sequence GNLRIDYRSCLECGTCRLLCDESTLQQWRY.

It belongs to the bacterial-type ferredoxin family. FixX subfamily.

Its function is as follows. Could be a 3Fe-4S cluster-containing protein. Probably participates in a redox process with YgcN, YgcQ and YgcR. In Escherichia coli (strain K12), this protein is Ferredoxin-like protein YgcO (ygcO).